Reading from the N-terminus, the 507-residue chain is RNA-splicing ligase RtcB homolog (507 aa).

Mn(2+) is bound by residues aspartate 121, cysteine 124, histidine 229, histidine 261, and histidine 355. 228–232 (NHYGE) contributes to the GMP binding site. GMP is bound by residues 355–356 (HN), 404–407 (GGTM), serine 411, 430–433 (HGSG), and lysine 506. Catalysis depends on histidine 430, which acts as the GMP-histidine intermediate.

Belongs to the RtcB family. Catalytic component of the tRNA-splicing ligase complex. It depends on Mn(2+) as a cofactor.

It carries out the reaction a 3'-end 3'-phospho-ribonucleotide-RNA + a 5'-end dephospho-ribonucleoside-RNA + GTP = a ribonucleotidyl-ribonucleotide-RNA + GMP + diphosphate. It catalyses the reaction a 3'-end 2',3'-cyclophospho-ribonucleotide-RNA + a 5'-end dephospho-ribonucleoside-RNA + GTP + H2O = a ribonucleotidyl-ribonucleotide-RNA + GMP + diphosphate + H(+). Functionally, catalytic subunit of the tRNA-splicing ligase complex that acts by directly joining spliced tRNA halves to mature-sized tRNAs by incorporating the precursor-derived splice junction phosphate into the mature tRNA as a canonical 3',5'-phosphodiester. May act as an RNA ligase with broad substrate specificity, and may function toward other RNAs. This Theileria parva (East coast fever infection agent) protein is RNA-splicing ligase RtcB homolog.